A 195-amino-acid polypeptide reads, in one-letter code: L-rhamnose-binding lectin CSL3 (195 aa).

SUEL-type lectin domains are found at residues 1–95 and 105–195; these read AISI…YSCV and ICEG…YTCD.

Functionally, L-rhamnose binding lectin. Has hemagglutinating activity towards rabbit erythrocytes, human type A erythrocytes, human type B erythrocytes, human type O erythrocytes and sheep erythrocytes. Hemagglutinating activity is inhibited by smooth-type lipopolysaccharide (LPS) from S.flexneri 1A, A.salmonicida and E.coli K12, but not by rough-type LPS from S.flexneri, E.coli K12 and E.coli EH100. Agglutinates E.coli K12 and B.subtilis. In Oncorhynchus keta (Chum salmon), this protein is L-rhamnose-binding lectin CSL3.